The sequence spans 124 residues: Large ribosomal subunit protein bL12 (124 aa).

It belongs to the bacterial ribosomal protein bL12 family. In terms of assembly, homodimer. Part of the ribosomal stalk of the 50S ribosomal subunit. Forms a multimeric L10(L12)X complex, where L10 forms an elongated spine to which 2 to 4 L12 dimers bind in a sequential fashion. Binds GTP-bound translation factors.

Its function is as follows. Forms part of the ribosomal stalk which helps the ribosome interact with GTP-bound translation factors. Is thus essential for accurate translation. The sequence is that of Large ribosomal subunit protein bL12 from Cupriavidus metallidurans (strain ATCC 43123 / DSM 2839 / NBRC 102507 / CH34) (Ralstonia metallidurans).